The chain runs to 377 residues: Actin depolymerising venom protein gelsolin 1 (377 aa).

The first 26 residues, 1–26 (MFRQMKLGSLATKLLLACFLVTCTSG), serve as a signal peptide directing secretion. Gelsolin-like repeat units follow at residues 50-133 (FVPV…SEQF), 174-243 (IRVR…SSTS), and 298-368 (EKPL…PTAF).

As to expression, expressed by the venom gland (posterior main gland) (at protein level).

The protein localises to the secreted. The protein is Actin depolymerising venom protein gelsolin 1 of Platymeris rhadamanthus (Red spot assassin bug).